Consider the following 280-residue polypeptide: Acetyl-coenzyme A carboxylase carboxyl transferase subunit beta (280 aa).

The region spanning 28-280 (LFLACPYCGA…IVRLHTAEAE (253 aa)) is the CoA carboxyltransferase N-terminal domain. Zn(2+)-binding residues include cysteine 32, cysteine 35, cysteine 50, and cysteine 53. The C4-type zinc-finger motif lies at 32 to 53 (CPYCGAQMYNKQLGKYRVCAKC).

Belongs to the AccD/PCCB family. In terms of assembly, acetyl-CoA carboxylase is a heterohexamer composed of biotin carboxyl carrier protein (AccB), biotin carboxylase (AccC) and two subunits each of ACCase subunit alpha (AccA) and ACCase subunit beta (AccD). Zn(2+) is required as a cofactor.

The protein localises to the cytoplasm. The enzyme catalyses N(6)-carboxybiotinyl-L-lysyl-[protein] + acetyl-CoA = N(6)-biotinyl-L-lysyl-[protein] + malonyl-CoA. It functions in the pathway lipid metabolism; malonyl-CoA biosynthesis; malonyl-CoA from acetyl-CoA: step 1/1. Its function is as follows. Component of the acetyl coenzyme A carboxylase (ACC) complex. Biotin carboxylase (BC) catalyzes the carboxylation of biotin on its carrier protein (BCCP) and then the CO(2) group is transferred by the transcarboxylase to acetyl-CoA to form malonyl-CoA. The chain is Acetyl-coenzyme A carboxylase carboxyl transferase subunit beta from Leuconostoc mesenteroides subsp. mesenteroides (strain ATCC 8293 / DSM 20343 / BCRC 11652 / CCM 1803 / JCM 6124 / NCDO 523 / NBRC 100496 / NCIMB 8023 / NCTC 12954 / NRRL B-1118 / 37Y).